Here is a 441-residue protein sequence, read N- to C-terminus: Tol-Pal system protein TolB (441 aa).

A signal peptide spans 1–23; sequence MRNAIATVLLGLAMLLPVGAVQA. The segment at 420–441 is disordered; the sequence is RNLKPVKTPDGASDPSWSPLQN.

The protein belongs to the TolB family. The Tol-Pal system is composed of five core proteins: the inner membrane proteins TolA, TolQ and TolR, the periplasmic protein TolB and the outer membrane protein Pal. They form a network linking the inner and outer membranes and the peptidoglycan layer.

It localises to the periplasm. In terms of biological role, part of the Tol-Pal system, which plays a role in outer membrane invagination during cell division and is important for maintaining outer membrane integrity. In Ruegeria sp. (strain TM1040) (Silicibacter sp.), this protein is Tol-Pal system protein TolB.